We begin with the raw amino-acid sequence, 338 residues long: Probable tRNA pseudouridine synthase B (338 aa).

Catalysis depends on Asp-78, which acts as the Nucleophile. Positions 245–320 constitute a PUA domain; it reads LPKIILRDSA…LAATSVRIMM (76 aa).

The protein belongs to the pseudouridine synthase TruB family. Type 2 subfamily.

The catalysed reaction is uridine(55) in tRNA = pseudouridine(55) in tRNA. Could be responsible for synthesis of pseudouridine from uracil-55 in the psi GC loop of transfer RNAs. The sequence is that of Probable tRNA pseudouridine synthase B from Methanosarcina barkeri (strain Fusaro / DSM 804).